Reading from the N-terminus, the 241-residue chain is Phosphoribosylaminoimidazole-succinocarboxamide synthase (241 aa).

It belongs to the SAICAR synthetase family.

The catalysed reaction is 5-amino-1-(5-phospho-D-ribosyl)imidazole-4-carboxylate + L-aspartate + ATP = (2S)-2-[5-amino-1-(5-phospho-beta-D-ribosyl)imidazole-4-carboxamido]succinate + ADP + phosphate + 2 H(+). The protein operates within purine metabolism; IMP biosynthesis via de novo pathway; 5-amino-1-(5-phospho-D-ribosyl)imidazole-4-carboxamide from 5-amino-1-(5-phospho-D-ribosyl)imidazole-4-carboxylate: step 1/2. The chain is Phosphoribosylaminoimidazole-succinocarboxamide synthase from Lacticaseibacillus casei (strain BL23) (Lactobacillus casei).